The following is a 319-amino-acid chain: Ferrochelatase (319 aa).

Positions 192 and 271 each coordinate Fe cation.

This sequence belongs to the ferrochelatase family.

Its subcellular location is the cytoplasm. It carries out the reaction heme b + 2 H(+) = protoporphyrin IX + Fe(2+). Its pathway is porphyrin-containing compound metabolism; protoheme biosynthesis; protoheme from protoporphyrin-IX: step 1/1. Catalyzes the ferrous insertion into protoporphyrin IX. This chain is Ferrochelatase, found in Geotalea uraniireducens (strain Rf4) (Geobacter uraniireducens).